The following is a 257-amino-acid chain: Putative hydro-lyase Bphy_2364 (257 aa).

The protein belongs to the D-glutamate cyclase family.

This Paraburkholderia phymatum (strain DSM 17167 / CIP 108236 / LMG 21445 / STM815) (Burkholderia phymatum) protein is Putative hydro-lyase Bphy_2364.